Here is a 407-residue protein sequence, read N- to C-terminus: Imidazolonepropionase (407 aa).

Residues histidine 68 and histidine 70 each coordinate Fe(3+). Histidine 68 and histidine 70 together coordinate Zn(2+). Arginine 77, tyrosine 140, and histidine 173 together coordinate 4-imidazolone-5-propanoate. Tyrosine 140 provides a ligand contact to N-formimidoyl-L-glutamate. Histidine 238 lines the Fe(3+) pocket. Histidine 238 is a Zn(2+) binding site. 4-imidazolone-5-propanoate is bound at residue glutamine 241. Aspartate 313 is a binding site for Fe(3+). Zn(2+) is bound at residue aspartate 313. Residues asparagine 315 and glycine 317 each coordinate N-formimidoyl-L-glutamate. Threonine 318 serves as a coordination point for 4-imidazolone-5-propanoate.

It belongs to the metallo-dependent hydrolases superfamily. HutI family. Zn(2+) serves as cofactor. Requires Fe(3+) as cofactor.

It localises to the cytoplasm. It catalyses the reaction 4-imidazolone-5-propanoate + H2O = N-formimidoyl-L-glutamate. The protein operates within amino-acid degradation; L-histidine degradation into L-glutamate; N-formimidoyl-L-glutamate from L-histidine: step 3/3. Catalyzes the hydrolytic cleavage of the carbon-nitrogen bond in imidazolone-5-propanoate to yield N-formimidoyl-L-glutamate. It is the third step in the universal histidine degradation pathway. The protein is Imidazolonepropionase of Burkholderia pseudomallei (strain 668).